We begin with the raw amino-acid sequence, 422 residues long: Glucuronoxylanase XynC (422 aa).

Residues 1–32 form the signal peptide; the sequence is MIPRIKKTICVLLVCFTMLSVMLGPGATEVLA. Glu-171 (proton donor) is an active-site residue. Glu-260 acts as the Nucleophile in catalysis.

The protein belongs to the glycosyl hydrolase 30 family.

Its subcellular location is the secreted. It catalyses the reaction Endohydrolysis of (1-&gt;4)-beta-D-xylosyl links in some glucuronoarabinoxylans.. Its pathway is glycan degradation; xylan degradation. In terms of biological role, catalyzes the depolymerization of methylglucuronoxylan (MeGAXn) from different sources. It cleaves the beta-1,4-xylosidic bond penultimate to that linking carbon one of the xylose residue substituted with alpha-1,2-linked 4-O-methyl-D-glucuronate (MeGA). This Bacillus subtilis (strain 168) protein is Glucuronoxylanase XynC (xynC).